A 7079-amino-acid chain; its full sequence is Replicase polyprotein 1ab (7079 aa).

Residues 12–127 form the CoV Nsp1 globular domain; it reads THVQLSLPVL…YRNVLLRKNG (116 aa). The region spanning 148–179 is the BetaCoV Nsp1 C-terminal domain; the sequence is ELGTDPIEDYEQNWNTKHGGGVLRELIRELNG. The region spanning 183–456 is the CoV Nsp2 N-terminal domain; that stretch reads TRYVDNNFCG…NEDLMEILNR (274 aa). Residues C200, C231, H234, H236, C323, C326, C341, C344, C370, C373, H382, and C416 each coordinate Zn(2+). A C2H2 region spans residues 200 to 236; the sequence is CIKDLLARAGKSMCTLSEQLDYIESKRGVYCCREHEH. The C4 stretch occupies residues 323-344; that stretch reads CNHCDEVSWQTCDFLKATCEQC. Residues 370 to 416 form a C2HC region; sequence CPACQDPEVGPEHSVADYHNHSNIETRLRKGGRTKCFGGCVFAYVGC. The region spanning 458 to 688 is the CoV Nsp2 middle domain; it reads RVNINIVGDF…LDVLNKALEM (231 aa). Residues 690 to 818 form the CoV Nsp2 C-terminal domain; that stretch reads IDQVIIAGAK…TNNVFSLKGG (129 aa). Positions 822 to 930 constitute a Ubiquitin-like 1 domain; sequence KGVTFGEDTV…MYCSFYPPDE (109 aa). Macro domains are found at residues 1001-1167, 1213-1341, and 1349-1476; these read VNQF…LGYL, KFKA…LPSK, and ILGT…TSSS. Residues 1478 to 1544 form the DPUP domain; sequence TSEEHFIETV…LLDKLKSLLS (67 aa). Positions 1548–1603 constitute a Ubiquitin-like 2 domain; the sequence is VRTIKVFTTVDNTNLHTQIVDMSMTYGQQFGPTYLDGADVTKIKPHAKHEGKTFFV. The Peptidase C16 domain occupies 1617-1881; sequence YYHTLDESFL…YTEIQPKLDE (265 aa). C1657 functions as the For PL-PRO activity in the catalytic mechanism. The Zn(2+) site is built by C1735, C1738, C1770, and C1772. The segment at 1735 to 1772 adopts a C4-type zinc-finger fold; sequence CKTCGQKSTTLTGVEAVMYMGTLSYEELKTGVTIPCIC. Active-site for PL-PRO activity residues include H1818 and D1832. The region spanning 1894–2004 is the Nucleic acid-binding domain; it reads PIDLVPTQPL…CLWSTKPVET (111 aa). The region spanning 2029–2138 is the G2M domain; that stretch reads PTSEEVVENP…LGQAAVTTTN (110 aa). Residues 2098-2377 form an HD1 region; the sequence is LALGLRTLAT…IFFAFCYYVW (280 aa). A helical membrane pass occupies residues 2209-2229; the sequence is LFTIAMWLLLLSICLGSLIYV. A 3Ecto domain is found at 2230–2300; that stretch reads TAAFGVLLSN…QVTISSYKLD (71 aa). 2 disulfide bridges follow: C2246–C2274 and C2265–C2271. 2 consecutive transmembrane segments (helical) span residues 2310-2330 and 2357-2377; these read WFLAYMLFTKFFYLLGLSAIM and MAPVSAMVRMYIFFAFCYYVW. The Y1 stretch occupies residues 2378 to 2468; sequence KSYVHIMDGC…QFKRPINPTD (91 aa). Positions 2378-2746 constitute a CoV Nsp3 Y domain; the sequence is KSYVHIMDGC…ITTKISLKGG (369 aa). Zn(2+) contacts are provided by H2382, C2387, C2392, C2395, C2428, H2431, C2435, and C2438. The ZF1 stretch occupies residues 2382–2395; that stretch reads HIMDGCTSSTCMMC. The interval 2428–2438 is ZF2; the sequence is CKAHNWNCLNC. The interval 2469–2563 is Y2; it reads QSSYVVDSVA…LLDQALVSDV (95 aa). The interval 2469-2746 is coV-Y; that stretch reads QSSYVVDSVA…ITTKISLKGG (278 aa). Residues 2564–2645 are Y3; it reads GDSTEVSVKM…ECLKLSHHSD (82 aa). The interval 2646 to 2746 is Y4; it reads LEVTGDSCNN…ITTKISLKGG (101 aa). 7 helical membrane passes run 2761 to 2781, 2998 to 3018, 3028 to 3048, 3060 to 3080, 3083 to 3103, 3111 to 3131, and 3148 to 3168; these read LLCVLAALFCYIIMPVHSLSV, PGVFCGVDAMNLIANIFTPLV, ASVVAGGIIAILVTCAAYYFM, VVAANALLFLMSFTILCLAPA, FLPGVYSIFYLYLTFYFTNDV, WFAMFSPIVPFWITAIYVFCI, and VMFNGVTFSTFEEAALCTFLL. The interval 2761-3168 is HD2; that stretch reads LLCVLAALFC…EEAALCTFLL (408 aa). One can recognise a Nsp4C domain in the interval 3148–3246; it reads VMFNGVTFST…QTSITSAVLQ (99 aa). The region spanning 3247–3552 is the Peptidase C30 domain; the sequence is SGFRKMAFPS…VRQCSGVTFQ (306 aa). Active-site for 3CL-PRO activity residues include H3287 and C3391. Helical transmembrane passes span 3570–3590, 3592–3612, 3618–3638, 3665–3684, 3691–3710, 3734–3754, and 3762–3782; these read FLTSLLILVQSTQWSLFFFVY, NAFLPFTLGIMAIAACAMLLV, FLCLFLLPSLATVAYFNMVYM, CVMYASALVLLVLMTARTVY, VWTLMNVITLVYKVYYGNSL, IMFLARAIVFVCVEYYPLLFI, and IMLVYCFLGYCCCCYFGLFCL. Residues 3570–3782 are HD3; sequence FLTSLLILVQ…CCCYFGLFCL (213 aa). In terms of domain architecture, RdRp Nsp7 cofactor spans 3843-3925; sequence SKMSDVKCTS…EMLDNRATLQ (83 aa). One can recognise a RdRp Nsp8 cofactor domain in the interval 3926–4123; sequence AIASEFSSLP…LRANSAVKLQ (198 aa). The Nsp9 ssRNA-binding domain occupies 4124 to 4236; sequence NNELSPVALR…GSLAATVRLQ (113 aa). One can recognise an ExoN/MTase coactivator domain in the interval 4237–4375; sequence AGNATEVPAN…CDQLREPMMQ (139 aa). C4310, C4313, H4319, C4326, C4353, C4356, C4364, and C4366 together coordinate Zn(2+). 2 zinc fingers span residues 4310–4326 and 4353–4366; these read CLYCRCHIDHPNPKGFC and CTVCGTWKGYGCSC. Positions 4382–4636 constitute a NiRAN domain; it reads FLNRVCGVSA…AAESHMDADL (255 aa). N4584 and D4593 together coordinate Mn(2+). Positions 4641-4739 constitute a Nsp12 Interface domain; sequence IKWDLLKYDF…HNQDVNLHSS (99 aa). Positions 4670, 4676, 4681, 4685, and 4862 each coordinate Zn(2+). Residues 4740–5307 form the Nsp12 RNA-dependent RNA polymerase domain; sequence RLSFKELLVY…AMYTPHTVLQ (568 aa). The interval 4742–4956 is rdRp Fingers N-ter; sequence SFKELLVYAA…HQKLLKSIAA (215 aa). The segment at 4957–4995 is rdRp Palm N-ter; sequence TRGATVVIGTSKFYGGWHNMLKTVYSDVETPHLMGWDYP. The RdRp catalytic domain occupies 4987–5149; that stretch reads PHLMGWDYPK…CYNSNYAAQG (163 aa). The tract at residues 4996–5054 is rdRp Fingers C-ter; sequence KCDRAMPNMLRIMASLVLARKHSTCCNLSHRFYRLANECAQVLSEMVMCGGSLYVKPGG. Residues H5017, C5020, and C5021 each coordinate Zn(2+). Residues 5055 to 5190 are rdRp Palm C-ter; it reads TSSGDATTAY…TKGPHEFCSQ (136 aa). Catalysis depends on residues S5134, D5135, and D5136. The interval 5191 to 5307 is rdRp Thumb; sequence HTMLVKQGDD…AMYTPHTVLQ (117 aa). The 113-residue stretch at 5308 to 5420 folds into the CV ZBD domain; it reads AVGACVLCNS…TDFNAIATCD (113 aa). Zn(2+)-binding residues include C5312, C5315, C5323, C5326, C5333, C5336, H5340, H5346, C5357, C5362, C5379, and H5382. In terms of domain architecture, (+)RNA virus helicase ATP-binding spans 5564–5745; it reads NISDEFSSNV…MKTIGPDMFL (182 aa). Residue 5589-5596 coordinates ATP; it reads GPPGTGKS. One can recognise a (+)RNA virus helicase C-terminal domain in the interval 5746 to 5915; it reads GTCRRCPAEI…TLQAENVTGL (170 aa). Positions 5980–6195 constitute an ExoN domain; the sequence is MFITREEAIR…RCLAVHECFV (216 aa). Active-site residues include D5998, E6000, and E6099. Zn(2+)-binding residues include C6115, C6118, C6134, H6137, H6165, C6169, and H6172. Catalysis depends on residues H6176 and D6181. C6187 contributes to the Zn(2+) binding site. The N7-MTase domain maps to 6204–6435; it reads YPIIGDELKI…NLWNTFTRLQ (232 aa). 6239-6245 contributes to the S-adenosyl-L-methionine binding site; the sequence is DIGNPKA. The gpppA-binding stretch occupies residues 6322 to 6336; that stretch reads CDGGSLYVNKHAFHT. C6360, C6381, C6392, and H6395 together coordinate Zn(2+). One can recognise a Nsp15 N-terminal oligomerization domain in the interval 6436-6496; sequence SLENVAYNVV…NVAFELWAKR (61 aa). In terms of domain architecture, AV-Nsp11N/CoV-Nsp15M spans 6497–6622; the sequence is NIKPVPEIKI…YFKKVDGIIQ (126 aa). The 140-residue stretch at 6639–6778 folds into the NendoU domain; the sequence is KPRSKMETDF…KDGHVETFYP (140 aa). Residues H6669, H6684, K6724, K6827, D6911, K6951, and E6984 contribute to the active site. One can recognise a Nidovirus-type SAM-dependent 2'-O-MTase domain in the interval 6783-7077; sequence SQAWQPGVAM…RVVVSSDILV (295 aa).

The protein belongs to the coronaviruses polyprotein 1ab family. As to quaternary structure, interacts with host PHB and PHB2. Interacts with papain-like protease nsp3 and non-structural protein 6. In terms of assembly, monomer. Homodimer. Only the homodimer shows catalytic activity. As to quaternary structure, interacts with nsp8 and nsp12 to form the replication-transcription complex (RTC): nsp12, nsp7, two subunits of nsp8, and up to two subunits of nsp13. Interacts with nsp7, nsp13 and nsp12 to form the replication-transcription complex (RTC): nsp12, nsp7, two subunits of nsp8, and up to two subunits of nsp13. In terms of assembly, interacts with nsp12. As to quaternary structure, interacts with proofreading exoribonuclease nsp14 and 2'-O-methyltransferase nsp16; these interactions enhance nsp14 and nsp16 enzymatic activities. Interacts with nsp7 and nsp8 to form the replication-transcription complex (RTC): nsp12, nsp7, two subunits of nsp8, and up to two subunits of nsp13. Interacts with nsp9. In terms of assembly, interacts with nsp8 to form the replication-transcription complex (RTC): nsp12, nsp7, two subunits of nsp8, and up to two subunits of nsp13. The cofactor is Mn(2+). Mg(2+) serves as cofactor. Specific enzymatic cleavages in vivo by its own proteases yield mature proteins. 3CL-PRO and PL-PRO proteinases are autocatalytically processed.

The protein localises to the host membrane. It localises to the host cytoplasm. The protein resides in the host perinuclear region. Its subcellular location is the host endoplasmic reticulum-Golgi intermediate compartment. The catalysed reaction is RNA(n) + a ribonucleoside 5'-triphosphate = RNA(n+1) + diphosphate. It carries out the reaction ATP + H2O = ADP + phosphate + H(+). The enzyme catalyses Thiol-dependent hydrolysis of ester, thioester, amide, peptide and isopeptide bonds formed by the C-terminal Gly of ubiquitin (a 76-residue protein attached to proteins as an intracellular targeting signal).. It catalyses the reaction a 5'-end (N(7)-methyl 5'-triphosphoguanosine)-ribonucleoside in mRNA + S-adenosyl-L-methionine = a 5'-end (N(7)-methyl 5'-triphosphoguanosine)-(2'-O-methyl-ribonucleoside) in mRNA + S-adenosyl-L-homocysteine + H(+). The catalysed reaction is uridylyl-uridylyl-ribonucleotide-RNA = a 3'-end uridylyl-2',3'-cyclophospho-uridine-RNA + a 5'-end dephospho-ribonucleoside-RNA. It carries out the reaction a 5'-end diphospho-ribonucleoside in mRNA + GTP + H(+) = a 5'-end (5'-triphosphoguanosine)-ribonucleoside in mRNA + diphosphate. The enzyme catalyses a 5'-end (5'-triphosphoguanosine)-ribonucleoside in mRNA + S-adenosyl-L-methionine = a 5'-end (N(7)-methyl 5'-triphosphoguanosine)-ribonucleoside in mRNA + S-adenosyl-L-homocysteine. The replicase polyprotein of coronaviruses is a multifunctional protein: it contains the activities necessary for the transcription of negative stranded RNA, leader RNA, subgenomic mRNAs and progeny virion RNA as well as proteinases responsible for the cleavage of the polyprotein into functional products. Its function is as follows. Inhibits host translation by interacting with the 40S ribosomal subunit. The nsp1-40S ribosome complex further induces an endonucleolytic cleavage near the 5'UTR of host mRNAs, targeting them for degradation. Viral mRNAs are not susceptible to nsp1-mediated endonucleolytic RNA cleavage thanks to the presence of a 5'-end leader sequence and are therefore protected from degradation. By suppressing host gene expression, nsp1 facilitates efficient viral gene expression in infected cells and evasion from host immune response. In terms of biological role, may play a role in the modulation of host cell survival signaling pathway by interacting with host PHB and PHB2. Indeed, these two proteins play a role in maintaining the functional integrity of the mitochondria and protecting cells from various stresses. Functionally, responsible for the cleavages located at the N-terminus of the replicase polyprotein. In addition, PL-PRO possesses a deubiquitinating/deISGylating activity and processes both 'Lys-48'- and 'Lys-63'-linked polyubiquitin chains from cellular substrates. Participates together with nsp4 in the assembly of virally-induced cytoplasmic double-membrane vesicles necessary for viral replication. Antagonizes innate immune induction of type I interferon by blocking the phosphorylation, dimerization and subsequent nuclear translocation of host IRF3. Also prevents host NF-kappa-B signaling. Participates in the assembly of virally-induced cytoplasmic double-membrane vesicles necessary for viral replication. Its function is as follows. Cleaves the C-terminus of replicase polyprotein at 11 sites. Recognizes substrates containing the core sequence [ILMVF]-Q-|-[SGACN]. Also able to bind an ADP-ribose-1''-phosphate (ADRP). In terms of biological role, plays a role in the initial induction of autophagosomes from host endoplasmic reticulum. Later, limits the expansion of these phagosomes that are no longer able to deliver viral components to lysosomes. Functionally, forms a hexadecamer with nsp8 (8 subunits of each) that may participate in viral replication by acting as a primase. Alternatively, may synthesize substantially longer products than oligonucleotide primers. Forms a hexadecamer with nsp7 (8 subunits of each) that may participate in viral replication by acting as a primase. Alternatively, may synthesize substantially longer products than oligonucleotide primers. Its function is as follows. Forms a primer, NSP9-pU, which is utilized by the polymerase for the initiation of RNA chains. Interacts with ribosome signal recognition particle RNA (SRP). Together with NSP8, suppress protein integration into the cell membrane, thereby disrupting host immune defenses. In terms of biological role, plays a pivotal role in viral transcription by stimulating both nsp14 3'-5' exoribonuclease and nsp16 2'-O-methyltransferase activities. Therefore plays an essential role in viral mRNAs cap methylation. Functionally, RNA-directed RNA polymerase that catalyzes the transcription of viral genomic and subgenomic RNAs. Acts in complex with nsp7 and nsp8 to transcribe both the minus and positive strands of genomic RNA. The kinase-like NiRAN domain of NSP12 attaches one or more nucleotides to the amino terminus of NSP9, forming a covalent RNA-protein intermediate that serves as transcription/replication primer. Subgenomic RNAs (sgRNAs) are formed by discontinuous transcription: The polymerase has the ability to pause at transcription-regulating sequences (TRS) and jump to the leader TRS, resulting in a major deletion. This creates a series of subgenomic RNAs that are replicated, transcribed and translated. In addition, Nsp12 is a subunit of the viral RNA capping enzyme that catalyzes the RNA guanylyltransferase reaction for genomic and sub-genomic RNAs. Subsequently, the NiRAN domain transfers RNA to GDP, and forms the core cap structure GpppA-RNA. Multi-functional protein with a zinc-binding domain in N-terminus displaying RNA and DNA duplex-unwinding activities with 5' to 3' polarity. Activity of helicase is dependent on magnesium. Its function is as follows. Plays a role in viral RNA synthesis through two distinct activities. The N7-guanine methyltransferase activity plays a role in the formation of the cap structure GpppA-RNA. The proofreading exoribonuclease reduces the sensitivity of the virus to RNA mutagens during replication. This activity acts on both ssRNA and dsRNA in a 3'-5' direction. In terms of biological role, plays a role in viral transcription/replication and prevents the simultaneous activation of host cell dsRNA sensors, such as MDA5/IFIH1, OAS, and PKR. Acts by degrading the 5'-polyuridines generated during replication of the poly(A) region of viral genomic and subgenomic RNAs. Catalyzes a two-step reaction in which a 2'3'-cyclic phosphate (2'3'-cP) is first generated by 2'-O transesterification, which is then hydrolyzed to a 3'-phosphate (3'-P). If not degraded, poly(U) RNA would hybridize with poly(A) RNA tails and activate host dsRNA sensors. Functionally, methyltransferase that mediates mRNA cap 2'-O-ribose methylation to the 5'-cap structure of viral mRNAs. N7-methyl guanosine cap is a prerequisite for binding of nsp16. Therefore plays an essential role in viral mRNAs cap methylation which is essential to evade immune system. The chain is Replicase polyprotein 1ab (rep) from Bat coronavirus 279/2005 (BtCoV).